A 327-amino-acid chain; its full sequence is Probable cell division protein WhiA (327 aa).

A DNA-binding region (H-T-H motif) is located at residues 275–308 (SLEELGRLADPQMTKDAVAGRIRRLLTTADKRAR).

This sequence belongs to the WhiA family.

Involved in cell division and chromosome segregation. The chain is Probable cell division protein WhiA from Corynebacterium efficiens (strain DSM 44549 / YS-314 / AJ 12310 / JCM 11189 / NBRC 100395).